The primary structure comprises 689 residues: UvrABC system protein C (689 aa).

The region spanning 16–95 (TNPGVYRFRD…IKEFAPRFNI (80 aa)) is the GIY-YIG domain. The UVR domain occupies 208–243 (KPYIRELTRQMNEAAECMDFETAAARRDDVGALERV). Residues 316–337 (LAPAASGRRRTARHGSEDVVGQ) form a disordered region.

This sequence belongs to the UvrC family. Interacts with UvrB in an incision complex.

It localises to the cytoplasm. In terms of biological role, the UvrABC repair system catalyzes the recognition and processing of DNA lesions. UvrC both incises the 5' and 3' sides of the lesion. The N-terminal half is responsible for the 3' incision and the C-terminal half is responsible for the 5' incision. In Kocuria rhizophila (strain ATCC 9341 / DSM 348 / NBRC 103217 / DC2201), this protein is UvrABC system protein C.